A 478-amino-acid chain; its full sequence is UDP-glycosyltransferase 71B5 (478 aa).

UDP-alpha-D-glucose is bound by residues S280, 347–349 (APQ), 364–372 (HCGWNSILE), and 386–389 (YAEQ).

This sequence belongs to the UDP-glycosyltransferase family.

In terms of biological role, possesses low quercetin 3-O-glucosyltransferase activity in vitro. The chain is UDP-glycosyltransferase 71B5 (UGT71B5) from Arabidopsis thaliana (Mouse-ear cress).